We begin with the raw amino-acid sequence, 331 residues long: Glyceraldehyde-3-phosphate dehydrogenase (331 aa).

NAD(+)-binding positions include 12–13 (RI), Asp-34, Arg-78, and Thr-120. Residues 149–151 (SCT), Thr-180, 209–210 (TG), and Arg-232 each bind D-glyceraldehyde 3-phosphate. Residue Cys-150 is the Nucleophile of the active site. Residue Asn-314 participates in NAD(+) binding.

It belongs to the glyceraldehyde-3-phosphate dehydrogenase family. As to quaternary structure, homotetramer.

It is found in the cytoplasm. It catalyses the reaction D-glyceraldehyde 3-phosphate + phosphate + NAD(+) = (2R)-3-phospho-glyceroyl phosphate + NADH + H(+). The protein operates within carbohydrate degradation; glycolysis; pyruvate from D-glyceraldehyde 3-phosphate: step 1/5. Its function is as follows. Catalyzes the oxidative phosphorylation of glyceraldehyde 3-phosphate (G3P) to 1,3-bisphosphoglycerate (BPG) using the cofactor NAD. The first reaction step involves the formation of a hemiacetal intermediate between G3P and a cysteine residue, and this hemiacetal intermediate is then oxidized to a thioester, with concomitant reduction of NAD to NADH. The reduced NADH is then exchanged with the second NAD, and the thioester is attacked by a nucleophilic inorganic phosphate to produce BPG. This Salmonella typhi protein is Glyceraldehyde-3-phosphate dehydrogenase (gapA).